The sequence spans 556 residues: TNF receptor-associated factor 6-A (556 aa).

The RING-type; degenerate zinc finger occupies 72-111 (CPICLMALREAVQTPCGHRFCKACILKSLRNAGHKCPVDN). TRAF-type zinc fingers lie at residues 148–204 (RHLE…EDKS) and 205–261 (GHEL…HNLA). One can recognise an MATH domain in the interval 384–533 (NGVFIWRIKG…NDTLLVRCSV (150 aa)).

The protein belongs to the TNF receptor-associated factor family. A subfamily. Homotrimer. Homooligomer. Interacts with tifa. In terms of tissue distribution, highly expressed in ovary and moderately expressed in kidney, spleen, stomach, colon and testis.

The protein localises to the cytoplasm. It localises to the cell cortex. Its subcellular location is the nucleus. The protein resides in the lipid droplet. The catalysed reaction is S-ubiquitinyl-[E2 ubiquitin-conjugating enzyme]-L-cysteine + [acceptor protein]-L-lysine = [E2 ubiquitin-conjugating enzyme]-L-cysteine + N(6)-ubiquitinyl-[acceptor protein]-L-lysine.. Its pathway is protein modification; protein ubiquitination. In terms of biological role, E3 ubiquitin ligase that, together with UBE2N and UBE2V1, mediates the synthesis of 'Lys-63'-linked-polyubiquitin chains conjugated to proteins, such as IKBKG, IRAK1, AKT1 and AKT2. Also mediates ubiquitination of free/unanchored polyubiquitin chain that leads to MAP3K7 activation. This chain is TNF receptor-associated factor 6-A (traf6-a), found in Xenopus laevis (African clawed frog).